The sequence spans 84 residues: Dolichol phosphate-mannose biosynthesis regulatory protein (84 aa).

The next 2 helical transmembrane spans lie at 11 to 31 (FGLV…VILL) and 49 to 69 (YAVL…GLFI).

This sequence belongs to the DPM2 family. In terms of assembly, component of the dolichol-phosphate mannose (DPM) synthase complex composed of DPM1, DPM2 and DPM3; in the complex interacts directly with DPM3. Component of the glycosylphosphatidylinositol-N-acetylglucosaminyltransferase (GPI-GnT) complex composed at least by PIGA, PIGC, PIGH, PIGP, PIGQ, PIGY and DPM2. Interacts with PIGA, PIGC and PIGQ.

Its subcellular location is the endoplasmic reticulum membrane. Its pathway is protein modification; protein glycosylation. In terms of biological role, regulates the biosynthesis of dolichol phosphate-mannose. Regulatory subunit of the dolichol-phosphate mannose (DPM) synthase complex; essential for the ER localization and stable expression of DPM1. Part of the glycosylphosphatidylinositol-N-acetylglucosaminyltransferase (GPI-GnT) complex that catalyzes the transfer of N-acetylglucosamine from UDP-N-acetylglucosamine to phosphatidylinositol and participates in the first step of GPI biosynthesis. May act by regulating the GPI-GNT complex. The polypeptide is Dolichol phosphate-mannose biosynthesis regulatory protein (Cricetulus griseus (Chinese hamster)).